We begin with the raw amino-acid sequence, 278 residues long: Elongation factor Ts (278 aa).

The segment at 82–85 (TDFV) is involved in Mg(2+) ion dislocation from EF-Tu.

It belongs to the EF-Ts family.

The protein resides in the cytoplasm. In terms of biological role, associates with the EF-Tu.GDP complex and induces the exchange of GDP to GTP. It remains bound to the aminoacyl-tRNA.EF-Tu.GTP complex up to the GTP hydrolysis stage on the ribosome. The sequence is that of Elongation factor Ts from Streptomyces avermitilis (strain ATCC 31267 / DSM 46492 / JCM 5070 / NBRC 14893 / NCIMB 12804 / NRRL 8165 / MA-4680).